An 857-amino-acid polypeptide reads, in one-letter code: ATP-dependent RNA helicase DDX24 (857 aa).

Residues 61-179 are disordered; sequence NPSRLFSSEE…SPKLPKKSKK (119 aa). Residues Ser-80 and Ser-92 each carry the phosphoserine modification. Basic residues predominate over residues 152–161; that stretch reads PRKKKNKGKK. At Ser-170 the chain carries Phosphoserine. The Q motif signature appears at 193–221; sequence SAWRDLFVPKAVLRALSFLGFSAPTPIQA. Positions 225–528 constitute a Helicase ATP-binding domain; it reads APAIRDKLDI…RILHKKHVKK (304 aa). 238–245 serves as a coordination point for ATP; the sequence is AETGSGKT. The tract at residues 279 to 363 is disordered; that stretch reads RFGATAHLGS…NEDGEEKFDA (85 aa). A phosphoserine mark is found at Ser-288 and Ser-296. Residues 290-307 show a composition bias toward basic and acidic residues; the sequence is CKDRTESGVLPEEARIET. Residues 309–330 are compositionally biased toward polar residues; it reads AQPSDSGVQATPETSASASAQT. Basic and acidic residues predominate over residues 345 to 363; the sequence is LEEKPVPKQNEDGEEKFDA. Lys-370 is covalently cross-linked (Glycyl lysine isopeptide (Lys-Gly) (interchain with G-Cter in SUMO2)). A DEAD box motif is present at residues 471 to 474; that stretch reads DEAD. The region spanning 576–723 is the Helicase C-terminal domain; that stretch reads DLYLYYFLMQ…LFPVQSKYMD (148 aa). A Glycyl lysine isopeptide (Lys-Gly) (interchain with G-Cter in SUMO2) cross-link involves residue Lys-624. The disordered stretch occupies residues 808 to 857; that stretch reads RYPTQSGRPPQPVLASRNIESALSCLSRQKRRRKKPKEPRAPPQPGSSTS. Residues 825–834 are compositionally biased toward polar residues; it reads NIESALSCLS. A compositionally biased stretch (basic residues) spans 835–844; the sequence is RQKRRRKKPK. A compositionally biased stretch (pro residues) spans 848–857; that stretch reads APPQPGSSTS.

This sequence belongs to the DEAD box helicase family. DDX24/MAK5 subfamily. In terms of assembly, interacts with FADD. Interacts with RIPK1; this interaction disrupts RLR signaling activation of IFN-dependent transcription factor IRF7. Interacts with NIP7. Interacts with EP300; this interaction prevents TP53 acetylation mediated by EP300. In terms of processing, ubiquitinated by MDM2 without targeting DDX24 for proteasomal degradation. Instead, polyubiquitylated DDX24 promotes interaction with NIP7, a component of pre-rRNP processing complex, and associates with pre-rRNA molecules and pre-ribosomal particles.

It localises to the cytoplasm. It is found in the nucleus. It carries out the reaction ATP + H2O = ADP + phosphate + H(+). ATP-dependent RNA helicase that plays a role in various aspects of RNA metabolism including pre-mRNA splicing and is thereby involved in different biological processes such as cell cycle regulation or innate immunity. Plays an inhibitory role in TP53 transcriptional activity and subsequently in TP53 controlled cell growth arrest and senescence by inhibiting its EP300 mediated acetylation. Negatively regulates cytosolic RNA-mediated innate immune signaling at least in part by affecting RIPK1/IRF7 interactions. Alternatively, possesses antiviral activity by recognizing gammaherpesvirus transcripts in the context of lytic reactivation. Plays an essential role in cell cycle regulation in vascular smooth muscle cells by interacting with and regulating FANCA (Fanconi anemia complementation group A) mRNA. The chain is ATP-dependent RNA helicase DDX24 (Ddx24) from Mus musculus (Mouse).